The primary structure comprises 806 residues: Lon protease (806 aa).

Residues 13–206 (LPMMPIRDVV…RVAEMLDIEI (194 aa)) enclose the Lon N-terminal domain. 356–363 (GPPGVGKT) lines the ATP pocket. The 182-residue stretch at 599 to 780 (KNEIGAATGL…DEVLKIALER (182 aa)) folds into the Lon proteolytic domain. Catalysis depends on residues Ser-686 and Lys-729.

It belongs to the peptidase S16 family. As to quaternary structure, homohexamer. Organized in a ring with a central cavity.

It is found in the cytoplasm. It catalyses the reaction Hydrolysis of proteins in presence of ATP.. ATP-dependent serine protease that mediates the selective degradation of mutant and abnormal proteins as well as certain short-lived regulatory proteins. Required for cellular homeostasis and for survival from DNA damage and developmental changes induced by stress. Degrades polypeptides processively to yield small peptide fragments that are 5 to 10 amino acids long. Binds to DNA in a double-stranded, site-specific manner. This is Lon protease from Solibacter usitatus (strain Ellin6076).